The sequence spans 398 residues: cAMP-dependent protein kinase, catalytic subunit-like (398 aa).

One can recognise a Protein kinase domain in the interval 90-344; sequence LERIITIGKG…TQDVKDHKWF (255 aa). ATP contacts are provided by residues 96–104 and Lys119; that span reads IGKGTFGRV. Asp213 serves as the catalytic Proton acceptor. The AGC-kinase C-terminal domain maps to 345–398; it reads EKVNWDDTLHLRVEPPIVPTLYHPGDTGNFDDYEEDTTGGPLCSQRDRDLFAEW.

The protein belongs to the protein kinase superfamily. Ser/Thr protein kinase family. cAMP subfamily.

It catalyses the reaction L-seryl-[protein] + ATP = O-phospho-L-seryl-[protein] + ADP + H(+). The catalysed reaction is L-threonyl-[protein] + ATP = O-phospho-L-threonyl-[protein] + ADP + H(+). In Caenorhabditis elegans, this protein is cAMP-dependent protein kinase, catalytic subunit-like.